The chain runs to 247 residues: Carboxy-S-adenosyl-L-methionine synthase (247 aa).

S-adenosyl-L-methionine contacts are provided by residues tyrosine 39, 64–66 (GCS), 89–90 (DN), 117–118 (DI), asparagine 132, and arginine 199.

Belongs to the class I-like SAM-binding methyltransferase superfamily. Cx-SAM synthase family. In terms of assembly, homodimer.

It carries out the reaction prephenate + S-adenosyl-L-methionine = carboxy-S-adenosyl-L-methionine + 3-phenylpyruvate + H2O. Its function is as follows. Catalyzes the conversion of S-adenosyl-L-methionine (SAM) to carboxy-S-adenosyl-L-methionine (Cx-SAM). The sequence is that of Carboxy-S-adenosyl-L-methionine synthase from Klebsiella pneumoniae (strain 342).